Here is a 361-residue protein sequence, read N- to C-terminus: Phosphoserine aminotransferase (361 aa).

Arg43 provides a ligand contact to L-glutamate. Residues 77–78 (AS), Trp103, Thr153, Asp173, and Gln196 contribute to the pyridoxal 5'-phosphate site. Lys197 is modified (N6-(pyridoxal phosphate)lysine). Residue 238–239 (NT) participates in pyridoxal 5'-phosphate binding.

Belongs to the class-V pyridoxal-phosphate-dependent aminotransferase family. SerC subfamily. Homodimer. It depends on pyridoxal 5'-phosphate as a cofactor.

It is found in the cytoplasm. The enzyme catalyses O-phospho-L-serine + 2-oxoglutarate = 3-phosphooxypyruvate + L-glutamate. It catalyses the reaction 4-(phosphooxy)-L-threonine + 2-oxoglutarate = (R)-3-hydroxy-2-oxo-4-phosphooxybutanoate + L-glutamate. It functions in the pathway amino-acid biosynthesis; L-serine biosynthesis; L-serine from 3-phospho-D-glycerate: step 2/3. It participates in cofactor biosynthesis; pyridoxine 5'-phosphate biosynthesis; pyridoxine 5'-phosphate from D-erythrose 4-phosphate: step 3/5. Its function is as follows. Catalyzes the reversible conversion of 3-phosphohydroxypyruvate to phosphoserine and of 3-hydroxy-2-oxo-4-phosphonooxybutanoate to phosphohydroxythreonine. In Pseudomonas putida (strain ATCC 47054 / DSM 6125 / CFBP 8728 / NCIMB 11950 / KT2440), this protein is Phosphoserine aminotransferase.